We begin with the raw amino-acid sequence, 120 residues long: uncharacterized protein (120 aa).

Residues 80–99 (PTRKLQTPLNEPPRTWRKTA) form a disordered region.

This is an uncharacterized protein from Goose circovirus (GoCV).